The following is a 122-amino-acid chain: Large ribosomal subunit protein bL19 (122 aa).

Belongs to the bacterial ribosomal protein bL19 family.

This protein is located at the 30S-50S ribosomal subunit interface and may play a role in the structure and function of the aminoacyl-tRNA binding site. The chain is Large ribosomal subunit protein bL19 from Novosphingobium aromaticivorans (strain ATCC 700278 / DSM 12444 / CCUG 56034 / CIP 105152 / NBRC 16084 / F199).